A 4574-amino-acid polypeptide reads, in one-letter code: E3 ubiquitin-protein ligase MYCBP2 (4574 aa).

Disordered stretches follow at residues 92–115 (RGKKALSKKKLKRRQKVKSKVKTR) and 599–620 (SASKGEDGESTKSRRQPKPYKP). 4 RCC1 repeats span residues 591–646 (DGSV…IVTK), 690–746 (SGEV…MMCQ), 943–993 (NGDV…VLLM), and 995–1051 (GQVF…LRID). Residues 611 to 620 (SRRQPKPYKP) show a composition bias toward basic residues. C1733 and C1850 are oxidised to a cystine. 2 disordered regions span residues 1976 to 1998 (APPTFNPNQSTDSTTGNQPEQGL) and 2313 to 2332 (LQRLPGTSSNSATGTDLTFG). Composition is skewed to polar residues over residues 1981 to 1998 (NPNQSTDSTTGNQPEQGL) and 2317 to 2328 (PGTSSNSATGTD). One copy of the Filamin repeat lies at 2336-2417 (APKLEATYEP…IHVTIDGIEI (82 aa)). Disordered stretches follow at residues 2613–2824 (GFDY…PSPH), 2845–2922 (SNDE…KQAM), 3085–3116 (SPGSSAILKKKENEKDSKKTKKEKKKKEKAEV), 3345–3365 (PGSNMKSMPPSLETSPITDSD), and 3505–3526 (FETEEEEDEENKGNKENLEQEK). Basic and acidic residues-rich tracts occupy residues 2639-2663 (HRQESRSSKTDSHSNRSVDQVKSKN) and 2678-2688 (DTGKLRSDSHS). Polar residues predominate over residues 2716–2729 (NPGSRSSSPKQKTF). The span at 2730 to 2745 (TSGRSSPSSTSSPRSS) shows a compositional bias: low complexity. 3 stretches are compositionally biased toward basic and acidic residues: residues 2761–2772 (VHLDPPRERSKS), 2854–2864 (SELHNAEEGSS), and 2874–2883 (PVKEELESRS). Composition is skewed to basic residues over residues 2887–2900 (VSRKTSSRHVRPKK) and 3102–3111 (KKTKKEKKKK). Residues 3515–3526 (NKGNKENLEQEK) are compositionally biased toward basic and acidic residues. The DOC domain maps to 3617–3795 (FNISVQSGYE…SVAQQKNCEA (179 aa)). The tract at residues 3815-3841 (GDAEPTPEQEEKNLLSSPEGEDKAPSD) is disordered. Positions 4324, 4327, 4342, 4344, 4347, 4350, 4371, 4374, 4440, and 4443 each coordinate Zn(2+). The RING-type; atypical zinc finger occupies 4324–4375 (CMICFTEALSAAPAIQLDCSHVFHLQCTRRVLENRWLGPRITFGFMSCPICK). The tandem cysteine domain stretch occupies residues 4435–4572 (YAYYVCFKCK…LGCGVCRNAH (138 aa)). The active site involves C4454. Zn(2+)-binding residues include C4471, C4474, C4483, H4486, C4495, C4498, and C4499. Residue C4506 is part of the active site. Zn(2+) is bound by residues C4513, C4516, C4534, C4548, H4554, C4565, and C4568.

Belongs to the RING-Cys relay (RCR) family. In terms of tissue distribution, widely expressed when the visual system begins developing. In the eye, expressed in all cells, including retinal ganglion cells, with no obvious gradient.

The protein resides in the nucleus. It localises to the cell projection. The protein localises to the axon. Its subcellular location is the cytoplasm. It is found in the cytoskeleton. The enzyme catalyses [E2 ubiquitin-conjugating enzyme]-S-ubiquitinyl-L-cysteine + [acceptor protein]-L-threonine = [E2 ubiquitin-conjugating enzyme]-L-cysteine + [acceptor protein]-3-O-ubiquitinyl-L-threonine.. It participates in protein modification; protein ubiquitination. Its function is as follows. Atypical E3 ubiquitin-protein ligase which specifically mediates ubiquitination of threonine and serine residues on target proteins, instead of ubiquitinating lysine residues. Shows esterification activity towards both threonine and serine, with a preference for threonine, and acts via two essential catalytic cysteine residues that relay ubiquitin to its substrate via thioester intermediates. Interacts with the E2 enzymes UBE2D1, UBE2D3, UBE2E1 and UBE2L3. Plays a key role in neural development, probably by mediating ubiquitination of threonine residues on target proteins. Involved in different processes such as regulation of neurite outgrowth, synaptic growth, synaptogenesis and axon degeneration. Required in the visual system for correct fasciculation, targeting and mapping of retinal axons. Acts as a regulator of pteridine synthesis. May play a role in the regulation of the circadian clock gene expression. The polypeptide is E3 ubiquitin-protein ligase MYCBP2 (Danio rerio (Zebrafish)).